Consider the following 403-residue polypeptide: Dihydroorotase (403 aa).

Residues H48 and H50 each contribute to the Zn(2+) site. Residues 50-52 (HLR) and N82 each bind substrate. Residues E140, H172, H211, and D277 each coordinate Zn(2+). D277 is an active-site residue. H281 serves as a coordination point for substrate.

The protein belongs to the metallo-dependent hydrolases superfamily. DHOase family. Class I DHOase subfamily. It depends on Zn(2+) as a cofactor.

The enzyme catalyses (S)-dihydroorotate + H2O = N-carbamoyl-L-aspartate + H(+). It participates in pyrimidine metabolism; UMP biosynthesis via de novo pathway; (S)-dihydroorotate from bicarbonate: step 3/3. Functionally, catalyzes the reversible cyclization of carbamoyl aspartate to dihydroorotate. The protein is Dihydroorotase of Archaeoglobus fulgidus (strain ATCC 49558 / DSM 4304 / JCM 9628 / NBRC 100126 / VC-16).